The primary structure comprises 249 residues: Probable cobalt-factor III C(17)-methyltransferase (249 aa).

It belongs to the precorrin methyltransferase family.

The enzyme catalyses Co(II)-factor III + S-adenosyl-L-methionine + H(+) = Co(II)-factor IV + S-adenosyl-L-homocysteine. It participates in cofactor biosynthesis; adenosylcobalamin biosynthesis; cob(II)yrinate a,c-diamide from sirohydrochlorin (anaerobic route): step 3/10. Methyltransferase that likely catalyzes the ring contraction and methylation of C-17 in cobalt-factor III to form cobalt-factor IV. May also convert cobalt-precorrin-3 to cobalt-precorrin-4. In Methanocaldococcus jannaschii (strain ATCC 43067 / DSM 2661 / JAL-1 / JCM 10045 / NBRC 100440) (Methanococcus jannaschii), this protein is Probable cobalt-factor III C(17)-methyltransferase (cbiH).